A 256-amino-acid chain; its full sequence is NAD-dependent protein deacylase 4 (256 aa).

In terms of domain architecture, Deacetylase sirtuin-type spans 1–250 (MRLPAEALKD…AKIHESLSTG (250 aa)). 19–39 (GAGISAESGILTYLDQMPKLW) provides a ligand contact to NAD(+). 2 residues coordinate substrate: tyrosine 64 and arginine 67. NAD(+) is bound at residue 98 to 101 (QNVD). Residue histidine 116 is the Proton acceptor of the active site. Residues cysteine 124, cysteine 127, cysteine 152, and cysteine 155 each contribute to the Zn(2+) site. Residues 192–194 (GTS), 218–220 (NTV), and alanine 236 contribute to the NAD(+) site.

Belongs to the sirtuin family. Class III subfamily. Zn(2+) serves as cofactor.

It localises to the cytoplasm. It catalyses the reaction N(6)-acetyl-L-lysyl-[protein] + NAD(+) + H2O = 2''-O-acetyl-ADP-D-ribose + nicotinamide + L-lysyl-[protein]. The enzyme catalyses N(6)-succinyl-L-lysyl-[protein] + NAD(+) + H2O = 2''-O-succinyl-ADP-D-ribose + nicotinamide + L-lysyl-[protein]. Its function is as follows. NAD-dependent lysine deacetylase and desuccinylase that specifically removes acetyl and succinyl groups on target proteins. Modulates the activities of several proteins which are inactive in their acylated form. This chain is NAD-dependent protein deacylase 4, found in Pseudomonas syringae pv. tomato (strain ATCC BAA-871 / DC3000).